Reading from the N-terminus, the 1005-residue chain is Band 4.1-like protein 2 (1005 aa).

The disordered stretch occupies residues 1-80; sequence MTTEVGSVSE…SRGISRFIPP (80 aa). Thr-2 carries the post-translational modification N-acetylthreonine. Ser-7 is subject to Phosphoserine. Residues 22-31 are compositionally biased toward basic and acidic residues; sequence ATKEKPKEVA. Phosphoserine is present on residues Ser-39, Ser-58, and Ser-87. Phosphothreonine is present on Thr-89. The segment at 93–196 is disordered; the sequence is AKDGGDKKEP…GGAAKRETKE (104 aa). Basic and acidic residues-rich tracts occupy residues 111–157 and 169–196; these read VLDK…EKPS and VSKEREEKVKETQEDKLEGGAAKRETKE. Residues Lys-140 and Lys-144 each participate in a glycyl lysine isopeptide (Lys-Gly) (interchain with G-Cter in SUMO2) cross-link. Phosphoserine is present on residues Ser-170, Ser-208, Ser-386, Ser-402, Ser-499, Ser-550, Ser-562, Ser-575, Ser-598, and Ser-614. Residues 218–499 form the FERM domain; it reads VQCKVTLLDG…EHHTFYRLVS (282 aa). Positions 502 to 610 are hydrophilic; the sequence is QPPKAKFLTL…KAPHLQLIEG (109 aa). The tract at residues 611–676 is spectrin--actin-binding; that stretch reads KKNSLRVEGD…WEKRRITPLS (66 aa). Tyr-623 is subject to Phosphotyrosine. Phosphoserine occurs at positions 627 and 647. Residues 652–800 form a disordered region; the sequence is KRNFMESTPE…EEAVPEASPV (149 aa). Positions 675 to 686 are enriched in polar residues; that stretch reads LSLQTQGSSHET. Over residues 690 to 711 the composition is skewed to basic and acidic residues; sequence VEEKKRAEVGKDERVITEEMNG. 2 positions are modified to phosphoserine: Ser-715 and Ser-718. The segment covering 734–746 has biased composition (low complexity); that stretch reads STSLSSESSSSSS. Composition is skewed to basic and acidic residues over residues 754-770 and 780-793; these read GEYRPHHRVTEGTIREE and EPRPAAKVVEREEA. Thr-763 is subject to Phosphothreonine. Ser-828 is modified (phosphoserine). The tract at residues 855-1005 is C-terminal (CTD); sequence HVDIDVLPQI…ETELAEEGED (151 aa).

As to quaternary structure, interacts with FCGR1A. Interacts with TRPC4. Interacts (via CTD domain) with FKBP2. Interacts with NUMA1; this interaction is negatively regulated by CDK1 during metaphase and promotes anaphase-specific localization of NUMA1 in symmetrically dividing cells. As to expression, widely expressed.

The protein resides in the cytoplasm. It localises to the cytoskeleton. It is found in the cell cortex. Its subcellular location is the cell membrane. In terms of biological role, required for dynein-dynactin complex and NUMA1 recruitment at the mitotic cell cortex during anaphase. In Homo sapiens (Human), this protein is Band 4.1-like protein 2.